A 94-amino-acid chain; its full sequence is Large ribosomal subunit protein bL27 (94 aa).

A propeptide spanning residues 1-9 (MTLNNLQLF) is cleaved from the precursor. The disordered stretch occupies residues 9 to 33 (FAHKKGGGSTSNGRDSQAKRLGAKA).

Belongs to the bacterial ribosomal protein bL27 family. Post-translationally, the N-terminus is cleaved by ribosomal processing cysteine protease Prp.

The sequence is that of Large ribosomal subunit protein bL27 from Streptococcus pneumoniae serotype 4 (strain ATCC BAA-334 / TIGR4).